We begin with the raw amino-acid sequence, 70 residues long: MKFLVNVALVFMVVYISYIYAAPEPEPAPEPEAEADAEADPEAGIGAVLKVLTTGLPALISWIKRKRQQG.

A signal peptide spans 1 to 21 (MKFLVNVALVFMVVYISYIYA). The propeptide at 22–43 (APEPEPAPEPEAEADAEADPEA) is removed by a dipeptidylpeptidase. N-formylglycine; partial is present on Gly44. A Glutamine amide modification is found at Gln69.

It belongs to the melittin family. As to quaternary structure, monomer (in solution and for integration into membranes), homotetramer (in solution and potentially as a toroidal pore in membranes), and potenially homomultimer (as a toroidal pore in membranes). In terms of tissue distribution, expressed by the venom gland.

Its subcellular location is the secreted. The protein resides in the target cell membrane. Melittin: Main toxin of bee venom with strong antimicrobial activity and hemolytic activity. It has enhancing effects on bee venom phospholipase A2 activity. This amphipathic toxin binds to negatively charged membrane surface and forms pore by inserting into lipid bilayers inducing the leakage of ions and molecules and the enhancement of permeability that ultimately leads to cell lysis. It acts as a voltage-gated pore with higher selectivity for anions over cations. The ion conductance has been shown to be voltage-dependent. Self-association of melittin in membranes is promoted by high ionic strength, but not by the presence of negatively charged lipids. In vivo, intradermal injection into healthy human volunteers produce sharp pain sensation and an inflammatory response. It produces pain by activating primary nociceptor cells directly and indirectly due to its ability to activate plasma membrane phospholipase A2 and its pore-forming activity. In the context of inflammation and cancer tests, is highly cytotoxic to normal cells, highly induces calcium signaling and almost completely prevents cAMP production. In addition, prevents LPS-induced nitric oxid (NO) synthesis but does not affect the IP3 signaling and pro-inflammatory activation of endothelial cells. Also shows significant antiproliferative activity on the breast cancer cell line MDA-MB-231. Its function is as follows. Melittin-S: 1.4-fold less hemolytic and adopts a less organized secondary structure than melittin. Functionally, melittin-2: Has strong hemolytic activity. This Apis mellifera (Honeybee) protein is Melittin (MELT).